Here is a 159-residue protein sequence, read N- to C-terminus: uncharacterized protein (159 aa).

This sequence belongs to the mimivirus L15/L51/R83 family.

This is an uncharacterized protein from Acanthamoeba polyphaga mimivirus (APMV).